The following is a 255-amino-acid chain: Taurine import ATP-binding protein TauB (255 aa).

The 228-residue stretch at 2–229 folds into the ABC transporter domain; sequence LQISHLYADY…RFVAGESSRS (228 aa). Position 34-41 (34-41) interacts with ATP; it reads GPSGCGKT.

It belongs to the ABC transporter superfamily. Taurine importer (TC 3.A.1.17.1) family. The complex is composed of two ATP-binding proteins (TauB), two transmembrane proteins (TauC) and a solute-binding protein (TauA).

The protein resides in the cell inner membrane. It catalyses the reaction taurine(out) + ATP + H2O = taurine(in) + ADP + phosphate + H(+). Part of the ABC transporter complex TauABC involved in taurine import. Responsible for energy coupling to the transport system. The polypeptide is Taurine import ATP-binding protein TauB (Shigella flexneri serotype 5b (strain 8401)).